Reading from the N-terminus, the 356-residue chain is tRNA N6-adenosine threonylcarbamoyltransferase (356 aa).

Fe cation-binding residues include H115 and H119. Residues 138-142 (LVSGG), D171, G184, and N283 each bind substrate. D311 contacts Fe cation.

Belongs to the KAE1 / TsaD family. Fe(2+) serves as cofactor.

The protein localises to the cytoplasm. The enzyme catalyses L-threonylcarbamoyladenylate + adenosine(37) in tRNA = N(6)-L-threonylcarbamoyladenosine(37) in tRNA + AMP + H(+). Required for the formation of a threonylcarbamoyl group on adenosine at position 37 (t(6)A37) in tRNAs that read codons beginning with adenine. Is involved in the transfer of the threonylcarbamoyl moiety of threonylcarbamoyl-AMP (TC-AMP) to the N6 group of A37, together with TsaE and TsaB. TsaD likely plays a direct catalytic role in this reaction. This Prochlorococcus marinus (strain MIT 9301) protein is tRNA N6-adenosine threonylcarbamoyltransferase.